The following is a 236-amino-acid chain: Large ribosomal subunit protein uL1 (236 aa).

This sequence belongs to the universal ribosomal protein uL1 family. In terms of assembly, part of the 50S ribosomal subunit.

Its function is as follows. Binds directly to 23S rRNA. The L1 stalk is quite mobile in the ribosome, and is involved in E site tRNA release. Functionally, protein L1 is also a translational repressor protein, it controls the translation of the L11 operon by binding to its mRNA. This is Large ribosomal subunit protein uL1 from Corynebacterium efficiens (strain DSM 44549 / YS-314 / AJ 12310 / JCM 11189 / NBRC 100395).